A 459-amino-acid polypeptide reads, in one-letter code: MPGFDRISELPESLITQILLCLPTKDSVKTSVLSTRWKNLWLNVPGLDLTCSDFPFEDEEYEQVFINFIDRFLEFNPESRLQTFEVDYKRREIRGFKDRIGTAINRGIRLLDAVSSTMYWEEECIMYPYLEFMPLNLFTSKTLVTLKLRDSALNDPGLLSMPCLKFMILREVRWSGTMSLEKLVSGCPVLEDLTLVRTLICHIDDDELPVTRVRSRSLKTFYVPLAYGVGCRSRVPDKVLEIDAPGLENMTLKEDHFDGIVVKNLTSLFMIELNIKFAVDYRRSFDPEDLSKRNEIGDFLTGISRARHMIISQKTVKALESYSKVGSIPKFNNLSHLKAVFPSPLLPFLPAFLESFPNLKNLILKIAFAKDDETEELNLINVPRCIVSTLECVEIKGLFEWEEEEMKIARYFLENAAVLKKLTMSFIDYPRYASNSDVYEDLDKLTKRSQQCRIIVDDE.

The F-box domain maps to 4 to 50 (FDRISELPESLITQILLCLPTKDSVKTSVLSTRWKNLWLNVPGLDLT). Positions 374–426 (TEELNLINVPRCIVSTLECVEIKGLFEWEEEEMKIARYFLENAAVLKKLTMSF) constitute an FBD domain.

This Arabidopsis thaliana (Mouse-ear cress) protein is FBD-associated F-box protein At5g27750.